The following is a 198-amino-acid chain: Ribonuclease HII (198 aa).

The RNase H type-2 domain occupies 10–198; the sequence is HLVAGVDEVG…PVKRALGLVS (189 aa). Positions 16, 17, and 108 each coordinate a divalent metal cation.

It belongs to the RNase HII family. Mn(2+) is required as a cofactor. It depends on Mg(2+) as a cofactor.

It is found in the cytoplasm. The enzyme catalyses Endonucleolytic cleavage to 5'-phosphomonoester.. In terms of biological role, endonuclease that specifically degrades the RNA of RNA-DNA hybrids. The chain is Ribonuclease HII from Salmonella paratyphi A (strain AKU_12601).